An 873-amino-acid chain; its full sequence is Alanine--tRNA ligase (873 aa).

Residues histidine 562, histidine 566, cysteine 664, and histidine 668 each coordinate Zn(2+).

It belongs to the class-II aminoacyl-tRNA synthetase family. Zn(2+) serves as cofactor.

It localises to the cytoplasm. The catalysed reaction is tRNA(Ala) + L-alanine + ATP = L-alanyl-tRNA(Ala) + AMP + diphosphate. Catalyzes the attachment of alanine to tRNA(Ala) in a two-step reaction: alanine is first activated by ATP to form Ala-AMP and then transferred to the acceptor end of tRNA(Ala). Also edits incorrectly charged Ser-tRNA(Ala) and Gly-tRNA(Ala) via its editing domain. This chain is Alanine--tRNA ligase, found in Shewanella amazonensis (strain ATCC BAA-1098 / SB2B).